The primary structure comprises 135 residues: Transcription antitermination protein NusB (135 aa).

The protein belongs to the NusB family.

Its function is as follows. Involved in transcription antitermination. Required for transcription of ribosomal RNA (rRNA) genes. Binds specifically to the boxA antiterminator sequence of the ribosomal RNA (rrn) operons. The protein is Transcription antitermination protein NusB of Shewanella halifaxensis (strain HAW-EB4).